Reading from the N-terminus, the 365-residue chain is 3-dehydroquinate synthase (365 aa).

NAD(+)-binding positions include 106–110 (GVIGD), 130–131 (TT), Lys-142, Lys-151, and 169–172 (FFAT). Zn(2+) contacts are provided by Glu-184, His-247, and His-264.

It belongs to the sugar phosphate cyclases superfamily. Dehydroquinate synthase family. Requires NAD(+) as cofactor. The cofactor is Co(2+). Zn(2+) serves as cofactor.

It is found in the cytoplasm. It catalyses the reaction 7-phospho-2-dehydro-3-deoxy-D-arabino-heptonate = 3-dehydroquinate + phosphate. It functions in the pathway metabolic intermediate biosynthesis; chorismate biosynthesis; chorismate from D-erythrose 4-phosphate and phosphoenolpyruvate: step 2/7. Its function is as follows. Catalyzes the conversion of 3-deoxy-D-arabino-heptulosonate 7-phosphate (DAHP) to dehydroquinate (DHQ). The polypeptide is 3-dehydroquinate synthase (Listeria monocytogenes serotype 4b (strain F2365)).